The following is a 359-amino-acid chain: MNQRKIIHVDMDAFYASIEQRDHPEYRGKPIAVGRPEMRGVVAAASYEARRFGVRSAMPSMKALKLCPHLIFTRNRMDVYKAVSAQIHAIFHRYTDLVEPLSLDEAFLDVTENKPGIPLAVDIARRIKKEIRRELHLTASAGVSYNKFLAKIASDYRKPDGLFTIHPSRAEKFIAALPIEAFWGVGHATAERMRALSITNGAQLRARDKDFLVRHFGKTGAIFYNFARGVDDRPVEPSRMRKSVGCEETYRENVTRAEALEQRLPLLAEELAGRLARSGFRGNTLTLKVKFPDFVQKTRCATVPEILTEKEGILPLARTLMEELDSGDRTFRLLGLSVSHPQEEQRQGIWEQLWLELEY.

The 181-residue stretch at Ile6–Gly186 folds into the UmuC domain. Mg(2+) is bound by residues Asp10 and Asp104. Glu105 is a catalytic residue.

This sequence belongs to the DNA polymerase type-Y family. Monomer. It depends on Mg(2+) as a cofactor.

The protein resides in the cytoplasm. It catalyses the reaction DNA(n) + a 2'-deoxyribonucleoside 5'-triphosphate = DNA(n+1) + diphosphate. Its function is as follows. Poorly processive, error-prone DNA polymerase involved in untargeted mutagenesis. Copies undamaged DNA at stalled replication forks, which arise in vivo from mismatched or misaligned primer ends. These misaligned primers can be extended by PolIV. Exhibits no 3'-5' exonuclease (proofreading) activity. May be involved in translesional synthesis, in conjunction with the beta clamp from PolIII. The sequence is that of DNA polymerase IV from Akkermansia muciniphila (strain ATCC BAA-835 / DSM 22959 / JCM 33894 / BCRC 81048 / CCUG 64013 / CIP 107961 / Muc).